Here is an 80-residue protein sequence, read N- to C-terminus: Toxin TdNa1 (80 aa).

A signal peptide spans 1-20 (MKGIILFISCLMLIDVVVES). An LCN-type CS-alpha/beta domain is found at 21–79 (RDAYPADWRGCKFSCFWGSSSWCNEECTSLGGSSGYCAWPACWCYGLPDSVRYYNNKCH). 4 cysteine pairs are disulfide-bonded: Cys31-Cys78, Cys35-Cys57, Cys43-Cys62, and Cys47-Cys64.

This sequence belongs to the long (4 C-C) scorpion toxin superfamily. Sodium channel inhibitor family. Beta subfamily. As to expression, expressed by the venom gland.

It is found in the secreted. Functionally, inhibits the sodium (Nav) currents in an apparent irreversible manner. Produces small depolarization and induces repetitive firing in squid axons. Is specific for arthropods (crickets, triatomides, crabs and squids), but is non-toxic to mice. The polypeptide is Toxin TdNa1 (Tityus discrepans (Venezuelan scorpion)).